A 236-amino-acid polypeptide reads, in one-letter code: MLVGLIGYGAIGKFLAEWLERNGFEIAAILDVRGEHEKMVRGIDEFLQREMDVAVEAASQQAVKDYAEKILKAGIDLIVLSTGAFADRDFLSRVREVCRKTGRRVYIASGAIGGLDAIFSASELIEEIVLTTRKNWRQFGRKGVIFEGSASEAAQKFPKNLNVAATLSIASGKDVKVRLVADEVEENIHEILVRGEFGEMEIRVRNRPMRENPKTSYLAALSVTRILRNLKEGLVV.

Residues alanine 10–isoleucine 11, aspartate 31, alanine 58–serine 59, tyrosine 66, leucine 80–serine 81, alanine 111, and asparagine 162 contribute to the NAD(+) site. The active site involves histidine 189. NAD(+) is bound at residue asparagine 212–threonine 215.

Belongs to the L-aspartate dehydrogenase family. In terms of assembly, homodimer.

The enzyme catalyses L-aspartate + NADP(+) + H2O = oxaloacetate + NH4(+) + NADPH + H(+). It carries out the reaction L-aspartate + NAD(+) + H2O = oxaloacetate + NH4(+) + NADH + H(+). It functions in the pathway cofactor biosynthesis; NAD(+) biosynthesis; iminoaspartate from L-aspartate (dehydrogenase route): step 1/1. In terms of biological role, specifically catalyzes the NAD or NADP-dependent dehydrogenation of L-aspartate to iminoaspartate. The polypeptide is L-aspartate dehydrogenase (Archaeoglobus fulgidus (strain ATCC 49558 / DSM 4304 / JCM 9628 / NBRC 100126 / VC-16)).